We begin with the raw amino-acid sequence, 246 residues long: Probable septum site-determining protein MinC (246 aa).

The protein belongs to the MinC family. Interacts with MinD and FtsZ.

Functionally, cell division inhibitor that blocks the formation of polar Z ring septums. Rapidly oscillates between the poles of the cell to destabilize FtsZ filaments that have formed before they mature into polar Z rings. Prevents FtsZ polymerization. This is Probable septum site-determining protein MinC from Pseudomonas savastanoi pv. phaseolicola (strain 1448A / Race 6) (Pseudomonas syringae pv. phaseolicola (strain 1448A / Race 6)).